Here is a 429-residue protein sequence, read N- to C-terminus: UDP-N-acetylglucosamine 1-carboxyvinyltransferase (429 aa).

A phosphoenolpyruvate-binding site is contributed by 22-23 (KN). Residue R102 participates in UDP-N-acetyl-alpha-D-glucosamine binding. Catalysis depends on C126, which acts as the Proton donor. The residue at position 126 (C126) is a 2-(S-cysteinyl)pyruvic acid O-phosphothioketal. UDP-N-acetyl-alpha-D-glucosamine is bound by residues 131–135 (RPVDL), D316, and I338.

Belongs to the EPSP synthase family. MurA subfamily.

It localises to the cytoplasm. It carries out the reaction phosphoenolpyruvate + UDP-N-acetyl-alpha-D-glucosamine = UDP-N-acetyl-3-O-(1-carboxyvinyl)-alpha-D-glucosamine + phosphate. It functions in the pathway cell wall biogenesis; peptidoglycan biosynthesis. Functionally, cell wall formation. Adds enolpyruvyl to UDP-N-acetylglucosamine. The chain is UDP-N-acetylglucosamine 1-carboxyvinyltransferase from Methylorubrum extorquens (strain CM4 / NCIMB 13688) (Methylobacterium extorquens).